The following is a 61-amino-acid chain: Small ribosomal subunit protein uS14 (61 aa).

Residues C24, C27, C40, and C43 each coordinate Zn(2+).

It belongs to the universal ribosomal protein uS14 family. Zinc-binding uS14 subfamily. Part of the 30S ribosomal subunit. Contacts proteins S3 and S10. Zn(2+) is required as a cofactor.

In terms of biological role, binds 16S rRNA, required for the assembly of 30S particles and may also be responsible for determining the conformation of the 16S rRNA at the A site. In Nitratidesulfovibrio vulgaris (strain DSM 19637 / Miyazaki F) (Desulfovibrio vulgaris), this protein is Small ribosomal subunit protein uS14.